The following is a 333-amino-acid chain: Tetraacyldisaccharide 4'-kinase (333 aa).

Residue Thr-60–Thr-67 participates in ATP binding.

Belongs to the LpxK family.

It carries out the reaction a lipid A disaccharide + ATP = a lipid IVA + ADP + H(+). The protein operates within glycolipid biosynthesis; lipid IV(A) biosynthesis; lipid IV(A) from (3R)-3-hydroxytetradecanoyl-[acyl-carrier-protein] and UDP-N-acetyl-alpha-D-glucosamine: step 6/6. In terms of biological role, transfers the gamma-phosphate of ATP to the 4'-position of a tetraacyldisaccharide 1-phosphate intermediate (termed DS-1-P) to form tetraacyldisaccharide 1,4'-bis-phosphate (lipid IVA). This chain is Tetraacyldisaccharide 4'-kinase, found in Azotobacter vinelandii (strain DJ / ATCC BAA-1303).